A 435-amino-acid polypeptide reads, in one-letter code: U-box domain-containing protein 36 (435 aa).

The stretch at 227-345 (EAEASKRKAR…LKGKREEEEA (119 aa)) forms a coiled coil. In terms of domain architecture, U-box spans 352–426 (EPPQYFICPI…QEWLQLRELL (75 aa)).

It catalyses the reaction S-ubiquitinyl-[E2 ubiquitin-conjugating enzyme]-L-cysteine + [acceptor protein]-L-lysine = [E2 ubiquitin-conjugating enzyme]-L-cysteine + N(6)-ubiquitinyl-[acceptor protein]-L-lysine.. It functions in the pathway protein modification; protein ubiquitination. Its function is as follows. Functions as an E3 ubiquitin ligase. This chain is U-box domain-containing protein 36 (PUB36), found in Arabidopsis thaliana (Mouse-ear cress).